The sequence spans 415 residues: Polyketide biosynthesis malonyl-ACP decarboxylase PksF (415 aa).

Positions 6–407 (LPEVVVTGVG…GMNTAVCIQN (402 aa)) constitute a Ketosynthase family 3 (KS3) domain.

This sequence belongs to the thiolase-like superfamily. Beta-ketoacyl-ACP synthases family.

Its subcellular location is the cytoplasm. It carries out the reaction malonyl-[ACP] + H(+) = acetyl-[ACP] + CO2. It participates in antibiotic biosynthesis; bacillaene biosynthesis. Functionally, involved in some intermediate steps for the synthesis of the antibiotic polyketide bacillaene which is involved in secondary metabolism. It decarboxylates selectively the malonyl group attached on the acyl-carrier-protein AcpK (Mal-AcpK). This Bacillus subtilis (strain 168) protein is Polyketide biosynthesis malonyl-ACP decarboxylase PksF (pksF).